The chain runs to 287 residues: UBX domain-containing protein 1 (287 aa).

The UBA domain occupies 1-42 (MAECSTLESLIEMGFSPSRAEKALAATGNQGIEPAMDWLVEH). The tract at residues 44 to 207 (DDPDIDEPSV…VQEPPTKKEY (164 aa)) is disordered. 2 stretches are compositionally biased toward basic and acidic residues: residues 72-114 (CEER…EQEK) and 129-169 (KIQE…ERAR). Residues 72 to 164 (CEERLPLTEE…RVREKIARDK (93 aa)) are a coiled coil. Low complexity predominate over residues 176 to 197 (SEPISPPAEASIPATTPSPSSP). Positions 205-284 (KEYDQCRIQV…GLVPSAVLIV (80 aa)) constitute a UBX domain.

It localises to the cytoplasm. Its function is as follows. Component of a complex required to couple deglycosylation and proteasome-mediated degradation of misfolded proteins in the endoplasmic reticulum that are retrotranslocated in the cytosol. Involved in ubiquitin-proteasome systems. This is UBX domain-containing protein 1 (ubxn1) from Xenopus tropicalis (Western clawed frog).